Consider the following 122-residue polypeptide: Histone H2B, gonadal (122 aa).

The disordered stretch occupies residues 1-31 (MPPKVSSKGAKKAGKAKAARSGDKKRKRRRK). The segment covering 9–31 (GAKKAGKAKAARSGDKKRKRRRK) has biased composition (basic residues). O-linked (GlcNAc) serine glycosylation occurs at Ser-109. Lys-117 participates in a covalent cross-link: Glycyl lysine isopeptide (Lys-Gly) (interchain with G-Cter in ubiquitin).

This sequence belongs to the histone H2B family. In terms of assembly, the nucleosome is a histone octamer containing two molecules each of H2A, H2B, H3 and H4 assembled in one H3-H4 heterotetramer and two H2A-H2B heterodimers. The octamer wraps approximately 147 bp of DNA. Monoubiquitination of Lys-117 gives a specific tag for epigenetic transcriptional activation and is also prerequisite for histone H3 'Lys-4' and 'Lys-79' methylation. Post-translationally, glcNAcylation at Ser-109 promotes monoubiquitination of Lys-117. It fluctuates in response to extracellular glucose, and associates with transcribed genes.

It localises to the nucleus. The protein localises to the chromosome. Core component of nucleosome. Nucleosomes wrap and compact DNA into chromatin, limiting DNA accessibility to the cellular machineries which require DNA as a template. Histones thereby play a central role in transcription regulation, DNA repair, DNA replication and chromosomal stability. DNA accessibility is regulated via a complex set of post-translational modifications of histones, also called histone code, and nucleosome remodeling. This chain is Histone H2B, gonadal, found in Patella granatina (Sandpaper limpet).